A 151-amino-acid polypeptide reads, in one-letter code: RNA polymerase-binding transcription factor DksA (151 aa).

A coiled-coil region spans residues 33–54 (NEAQLAHFRRILEAWRNQLRDE). Zn(2+)-binding residues include Cys-114, Cys-117, Cys-135, and Cys-138. Residues 114 to 138 (CESCGVEIGIRRLEARPTADLCIDC) form a dksA C4-type zinc finger.

It belongs to the DksA family. In terms of assembly, interacts directly with the RNA polymerase.

It is found in the cytoplasm. Its function is as follows. Transcription factor that acts by binding directly to the RNA polymerase (RNAP). Required for negative regulation of rRNA expression and positive regulation of several amino acid biosynthesis promoters. Also required for regulation of fis expression. The chain is RNA polymerase-binding transcription factor DksA from Escherichia coli O157:H7.